The chain runs to 53 residues: Bowman-Birk type proteinase inhibitor 1 (53 aa).

Disulfide bonds link Cys9/Cys24, Cys12/Cys51, Cys14/Cys22, Cys31/Cys38, and Cys40/Cys48.

In terms of assembly, dimer.

Inhibits trypsin (IC(50)=6.20 nM), neutrophil elastase (ELANE) and, to a lesser extent, alpha-chymotrypsin (IC(50)=3.44 uM). This chain is Bowman-Birk type proteinase inhibitor 1, found in Lathyrus sativus (White vetchling).